The chain runs to 605 residues: Condensin-2 complex subunit H2 (605 aa).

Threonine 19 carries the phosphothreonine modification. A phosphoserine mark is found at serine 95, serine 200, serine 208, serine 228, and serine 232. The tract at residues 194-331 is disordered; it reads LEPEGMSPME…PFDSLESKPF (138 aa). Acidic residues predominate over residues 256–266; it reads GEDEDAEEAVE. Residues serine 282, serine 284, serine 466, and serine 492 each carry the phosphoserine modification.

Belongs to the CND2 H2 (condensin-2 subunit 2) family. Component of the condensin-2 complex, which contains the SMC2 and SMC4 heterodimer, and three non SMC subunits, NCAPG2, NCAPH2 and NCAPD3 that probably regulate the complex.

It localises to the nucleus. It is found in the chromosome. Functionally, regulatory subunit of the condensin-2 complex, a complex that seems to provide chromosomes with an additional level of organization and rigidity and in establishing mitotic chromosome architecture. May promote the resolution of double-strand DNA catenanes (intertwines) between sister chromatids. Condensin-mediated compaction likely increases tension in catenated sister chromatids, providing directionality for type II topoisomerase-mediated strand exchanges toward chromatid decatenation. Required for decatenation of chromatin bridges at anaphase. Early in neurogenesis, may play an essential role to ensure accurate mitotic chromosome condensation in neuron stem cells, ultimately affecting neuron pool and cortex size. Seems to have lineage-specific role in T-cell development. The polypeptide is Condensin-2 complex subunit H2 (NCAPH2) (Homo sapiens (Human)).